Reading from the N-terminus, the 270-residue chain is L-cystine-binding protein TcyK (270 aa).

The first 20 residues, Met1–Ala20, serve as a signal peptide directing secretion. A lipid anchor (N-palmitoyl cysteine) is attached at Cys21. The S-diacylglycerol cysteine moiety is linked to residue Cys21.

This sequence belongs to the bacterial solute-binding protein 3 family. The complex is composed of two ATP-binding proteins (TcyN), two transmembrane proteins (TcyL and TcyM) and two solute-binding proteins (TcyJ and TcyK).

It is found in the cell membrane. Part of the ABC transporter complex TcyJKLMN involved in L-cystine import. Is also involved in cystathionine, djenkolate, and S-methylcysteine transport. The sequence is that of L-cystine-binding protein TcyK (tcyK) from Bacillus subtilis (strain 168).